The sequence spans 239 residues: Ribosomal RNA small subunit methyltransferase G (239 aa).

Residues Gly77, Phe82, 128–129 (AE), and Arg147 each bind S-adenosyl-L-methionine.

The protein belongs to the methyltransferase superfamily. RNA methyltransferase RsmG family.

The protein localises to the cytoplasm. In terms of biological role, specifically methylates the N7 position of guanine in position 535 of 16S rRNA. The chain is Ribosomal RNA small subunit methyltransferase G from Bacillus cereus (strain ZK / E33L).